The following is a 336-amino-acid chain: Galactose/methyl galactoside import permease protein MglC (336 aa).

Helical transmembrane passes span Gly-17–Leu-37, Ile-53–Gly-73, Leu-107–Ile-127, Ala-128–Ile-148, Phe-181–Trp-201, Val-227–Leu-247, Thr-257–Val-277, Phe-279–Ile-299, and Ile-306–Ala-326.

This sequence belongs to the binding-protein-dependent transport system permease family. AraH/RbsC subfamily. The complex is composed of one ATP-binding protein (MglA), two transmembrane proteins (MglC) and a solute-binding protein (MglB).

The protein resides in the cell inner membrane. Functionally, part of the ABC transporter complex MglABC involved in galactose/methyl galactoside import. Probably responsible for the translocation of the substrate across the membrane. This Salmonella typhimurium (strain LT2 / SGSC1412 / ATCC 700720) protein is Galactose/methyl galactoside import permease protein MglC (mglC).